The sequence spans 133 residues: Small ribosomal subunit protein uS8 (133 aa).

Belongs to the universal ribosomal protein uS8 family. Part of the 30S ribosomal subunit. Contacts proteins S5 and S12.

In terms of biological role, one of the primary rRNA binding proteins, it binds directly to 16S rRNA central domain where it helps coordinate assembly of the platform of the 30S subunit. This chain is Small ribosomal subunit protein uS8, found in Prochlorococcus marinus (strain MIT 9312).